The following is an 893-amino-acid chain: Major vault protein (893 aa).

N-acetylalanine is present on Ala2. MVP repeat units follow at residues 2 to 56, 57 to 111, 112 to 164, 165 to 217, 218 to 272, 273 to 323, 324 to 379, 380 to 457, and 458 to 520; these read ATEE…VPPR, HYCT…DITP, LQVV…EIIQ, ATII…DLVD, AVIL…GVVP, ITTL…IQDV, YVLS…ERQA, IPLD…KTRV, and VSYR…LLGP. Lys444 participates in a covalent cross-link: Glycyl lysine isopeptide (Lys-Gly) (interchain with G-Cter in SUMO2). Ser445 is subject to Phosphoserine. Lys704 is covalently cross-linked (Glycyl lysine isopeptide (Lys-Gly) (interchain with G-Cter in SUMO2)). A disordered region spans residues 856–893; it reads QPLGRRVASGPSPGEGISPQSAQAPQAPGDNHVVPVLR.

The vault ribonucleoprotein particle is a huge (400 A x 670 A) cage structure of 12.9 MDa. It consists of a dimer of half-vaults, with each half-vault comprising 39 identical major vault protein (MVP) chains, PARP4 and one or more vault RNAs (vRNAs). Interacts with TEP1. Interacts with PTEN and activated MAPK1. The phosphorylated protein interacts with the SH2 domains of PTPN11 and SRC. Interacts with APEX1. May interact with ZNF540. Post-translationally, phosphorylated on Tyr residues after EGF stimulation. In terms of processing, dephosphorylated by PTPN11. Present in most normal tissues. Higher expression observed in epithelial cells with secretory and excretory functions, as well as in cells chronically exposed to xenobiotics, such as bronchial cells and cells lining the intestine. Overexpressed in many multidrug-resistant cancer cells.

It localises to the cytoplasm. It is found in the nucleus. The protein localises to the nuclear pore complex. Its subcellular location is the perinuclear region. In terms of biological role, required for normal vault structure. Vaults are multi-subunit structures that may act as scaffolds for proteins involved in signal transduction. Vaults may also play a role in nucleo-cytoplasmic transport. Down-regulates IFNG-mediated STAT1 signaling and subsequent activation of JAK. Down-regulates SRC activity and signaling through MAP kinases. In Homo sapiens (Human), this protein is Major vault protein (MVP).